Reading from the N-terminus, the 148-residue chain is Large ribosomal subunit protein bL9 (148 aa).

It belongs to the bacterial ribosomal protein bL9 family.

Functionally, binds to the 23S rRNA. This chain is Large ribosomal subunit protein bL9, found in Clostridium beijerinckii (strain ATCC 51743 / NCIMB 8052) (Clostridium acetobutylicum).